The primary structure comprises 71 residues: Disintegrin tzabcanin (71 aa).

Residues 1 to 71 (GEECDCGSPA…ADCPRNHFHA (71 aa)) form the Disintegrin domain. 6 cysteine pairs are disulfide-bonded: Cys-4/Cys-19, Cys-6/Cys-14, Cys-13/Cys-36, Cys-27/Cys-33, Cys-32/Cys-57, and Cys-45/Cys-64. Residues 49–51 (RGD) carry the Cell attachment site motif.

Belongs to the venom metalloproteinase (M12B) family. P-II subfamily. P-IIa sub-subfamily. Expressed by the venom gland.

It is found in the secreted. In terms of biological role, inhibits fibrinogen interaction with platelets. Acts by binding to alpha-IIb/beta-3 (ITGA2B/ITGB3) on the platelet surface and inhibits aggregation induced by ADP, thrombin, platelet-activating factor and collagen. Inhibits cell adhesion to vitronectin, probably by blocking its receptor integrin alpha-V/beta-3 (ITGAV/ITGB3), and to fibronectin in vitro. Shows little to no cytotoxicity in vitro. The sequence is that of Disintegrin tzabcanin from Crotalus tzabcan (Yucatan neotropical rattlesnake).